Consider the following 88-residue polypeptide: UPF0297 protein SAK_2030 (88 aa).

This sequence belongs to the UPF0297 family.

This chain is UPF0297 protein SAK_2030, found in Streptococcus agalactiae serotype Ia (strain ATCC 27591 / A909 / CDC SS700).